Consider the following 118-residue polypeptide: Mating-type P-specific polypeptide Pc (118 aa).

A DNA-binding region (HMG box) is located at residues 29-97 (KTTIYKNGFM…VRRQIAKLER (69 aa)).

It is found in the nucleus. Functionally, mating type proteins are sequence specific DNA-binding proteins that act as master switches in yeast differentiation by controlling gene expression in a cell type-specific fashion. Required for conjugation and efficient meiosis. The sequence is that of Mating-type P-specific polypeptide Pc (mat2-Pc) from Schizosaccharomyces pombe (Fission yeast).